The primary structure comprises 506 residues: H/ACA ribonucleoprotein complex subunit DKC1 (506 aa).

Residues 1–26 (MADTESKKEKKRKSKKISDEEVGDIQ) are disordered. The active-site Nucleophile is D120. The 76-residue stretch at 291 to 366 (HKRIVMKDSA…VVAKIKRVIM (76 aa)) folds into the PUA domain. 2 disordered regions span residues 391-410 (GLLD…WKEG) and 419-506 (VKKG…ADSD). The span at 421–434 (KGGEASAKRKRDES) shows a compositional bias: basic and acidic residues. The span at 457–466 (EKKKKKKEKK) shows a compositional bias: basic residues.

This sequence belongs to the pseudouridine synthase TruB family. As to quaternary structure, part of the H/ACA small nucleolar ribonucleoprotein (H/ACA snoRNP) complex. The complex binds a box H/ACA small nucleolar RNA (snoRNA), which may target the specific site of modification within the RNA substrate.

It localises to the nucleus. Its subcellular location is the nucleolus. The protein resides in the cajal body. It carries out the reaction uridine in 5S rRNA = pseudouridine in 5S rRNA. In terms of biological role, catalytic subunit of H/ACA small nucleolar ribonucleoprotein (H/ACA snoRNP) complex, which catalyzes pseudouridylation of rRNA. This involves the isomerization of uridine such that the ribose is subsequently attached to C5, instead of the normal N1. Pseudouridine ('psi') residues may serve to stabilize the conformation of rRNAs. Required for ribosome biogenesis and telomere maintenance. In Danio rerio (Zebrafish), this protein is H/ACA ribonucleoprotein complex subunit DKC1.